A 436-amino-acid chain; its full sequence is Cholecystokinin receptor type A (436 aa).

Residues 1-41 (MDVVDSLLMNGSNITPPCELGLENETLFCLDQPQPSKEWQS) lie on the Extracellular side of the membrane. Asn10 and Asn24 each carry an N-linked (GlcNAc...) asparagine glycan. An intrachain disulfide couples Cys18 to Cys29. The chain crosses the membrane as a helical span at residues 42–67 (AVQILLYSFIFLLSVLGNTLVITVLI). The Cytoplasmic segment spans residues 68-77 (RNKRMRTVTN). The chain crosses the membrane as a helical span at residues 78-104 (IFLLSLAVSDLMLCLFCMPFNLIPNLL). Over 105–115 (KDFIFGSAVCK) the chain is Extracellular. The cysteines at positions 114 and 196 are disulfide-linked. Residues 116–137 (TTTYFMGTSVSVSTFNLVAISL) traverse the membrane as a helical segment. The Cytoplasmic segment spans residues 138-157 (ERYGAICRPLQSRVWQTKSH). A helical membrane pass occupies residues 158 to 178 (ALKVIAATWCLSFTIMTPYPI). Residues 179–210 (YSNLVPFTKNNNQTANMCRFLLPSDAMQQSWQ) are Extracellular-facing. A glycan (N-linked (GlcNAc...) asparagine) is linked at Asn190. The chain crosses the membrane as a helical span at residues 211 to 234 (TFLLLILFLIPGVVMVVAYGLISL). The Cytoplasmic portion of the chain corresponds to 235–321 (ELYQGIKFDA…NLIAKKRVIR (87 aa)). Residues 252–280 (EKRLSSGGGGGGGSSSSRYEDSDGCYLQK) form a disordered region. A helical membrane pass occupies residues 322-342 (MLIVIVVLFFLCWMPIFSANA). Residues 343–357 (WRAYDTVSAEKHLSG) are Extracellular-facing. The chain crosses the membrane as a helical span at residues 358–381 (TPISFILLLSYTSSCVNPIIYCFM). Residues 382 to 436 (NKRFRLGFMATFPCCPNPGPTGVRGEVGEEEDGRTIRASLSRYSYSHMSTSAPPH) are Cytoplasmic-facing. A lipid anchor (S-palmitoyl cysteine) is attached at Cys395.

It belongs to the G-protein coupled receptor 1 family.

Its subcellular location is the cell membrane. In terms of biological role, receptor for cholecystokinin. Mediates pancreatic growth and enzyme secretion, smooth muscle contraction of the gall bladder and stomach. Has a 1000-fold higher affinity for CCK rather than for gastrin. It modulates feeding and dopamine-induced behavior in the central and peripheral nervous system. This receptor mediates its action by association with G proteins that activate a phosphatidylinositol-calcium second messenger system. The protein is Cholecystokinin receptor type A (Cckar) of Mus musculus (Mouse).